Consider the following 300-residue polypeptide: tRNA dimethylallyltransferase (300 aa).

An ATP-binding site is contributed by 9 to 16 (GPTASGKS). 11–16 (TASGKS) lines the substrate pocket. An interaction with substrate tRNA region spans residues 34–37 (DSKQ).

Belongs to the IPP transferase family. In terms of assembly, monomer. Mg(2+) is required as a cofactor.

It catalyses the reaction adenosine(37) in tRNA + dimethylallyl diphosphate = N(6)-dimethylallyladenosine(37) in tRNA + diphosphate. Functionally, catalyzes the transfer of a dimethylallyl group onto the adenine at position 37 in tRNAs that read codons beginning with uridine, leading to the formation of N6-(dimethylallyl)adenosine (i(6)A). The protein is tRNA dimethylallyltransferase of Ehrlichia ruminantium (strain Welgevonden).